The following is a 616-amino-acid chain: Chaperone protein DnaK (616 aa).

Thr-174 is subject to Phosphothreonine; by autocatalysis. A disordered region spans residues 575–616 (QQTQGAQSDPGAAGFGGQQEAPGAGQDENVVDADYKVVDDDK). Over residues 607–616 (ADYKVVDDDK) the composition is skewed to basic and acidic residues.

It belongs to the heat shock protein 70 family.

Acts as a chaperone. This is Chaperone protein DnaK from Ruminiclostridium cellulolyticum (strain ATCC 35319 / DSM 5812 / JCM 6584 / H10) (Clostridium cellulolyticum).